A 162-amino-acid chain; its full sequence is Disulfide bond formation protein B (162 aa).

Over 1–8 the chain is Cytoplasmic; the sequence is MTPLFRKA. Residues 9–25 traverse the membrane as a helical segment; it reads VWLLFAVSVCAFAGSLA. Residues 26 to 43 lie on the Periplasmic side of the membrane; sequence AQYVLGMEPCVLCISQRL. Cysteines 35 and 38 form a disulfide. The helical transmembrane segment at 44 to 60 threads the bilayer; that stretch reads CVLATALCAAVVLACKP. At 61–67 the chain is on the cytoplasmic side; it reads KGRVGGL. A helical transmembrane segment spans residues 68–85; sequence SGAVFISIPAVTGISVAA. At 86-141 the chain is on the periplasmic side; that stretch reads YQLWLQSLPPGAAPSCGAPWTFRLKGWPLFDWFEPVVRGFGNCAEPDYLLGVALPV. Cys101 and Cys128 form a disulfide bridge. Residues 142–160 traverse the membrane as a helical segment; that stretch reads WSAAYFLAVVLTVWWAWAR. The Cytoplasmic portion of the chain corresponds to 161–162; sequence AK.

Belongs to the DsbB family.

Its subcellular location is the cell inner membrane. Its function is as follows. Required for disulfide bond formation in some periplasmic proteins. Acts by oxidizing the DsbA protein. The sequence is that of Disulfide bond formation protein B from Neisseria gonorrhoeae (strain ATCC 700825 / FA 1090).